An 895-amino-acid polypeptide reads, in one-letter code: Stonin-2 (895 aa).

Disordered regions lie at residues 10–101 (THQS…AISN), 144–204 (ASES…METI), and 236–279 (NEVG…PKST). A compositionally biased stretch (basic and acidic residues) spans 64-73 (SHSEQDDSSE). Composition is skewed to polar residues over residues 145-169 (SESS…TDLQ) and 179-193 (GRAS…SSSL). Phosphoserine is present on residues Ser-278, Ser-284, and Ser-299. Disordered regions lie at residues 291–326 (ISSL…SPIN) and 386–424 (QIDD…PRDG). 2 consecutive short sequence motifs (NPF) follow at residues 310–312 (NPF) and 326–328 (NPF). Polar residues predominate over residues 311–323 (PFLNESLQDIQPS). The SHD domain maps to 424–557 (GWPMMLRIPE…DLPVQSMDLS (134 aa)). The 308-residue stretch at 565 to 872 (EEEITVDIRD…AHYSYKVEIE (308 aa)) folds into the MHD domain. Ser-759 is subject to Phosphoserine.

It belongs to the Stoned B family. Interacts with the second C2 domain of synaptotagmins SYT1 and SYT2. Interacts with EPS15, EPS15R and ITSN1. Interacts indirectly with the AP-2 adapter complex. Interacts with TOR1A and COPS4; the interaction controls STON2 protein stability. Phosphorylated in vitro by PKD. In terms of processing, neddylated and ubiquitinated; leading to its degradation and inhibited by TOR1A and COPS4.

It localises to the synapse. The protein localises to the synaptosome. Its subcellular location is the cytoplasm. The protein resides in the membrane. Functionally, adapter protein involved in endocytic machinery. Involved in the synaptic vesicle recycling. May facilitate clathrin-coated vesicle uncoating. This Rattus norvegicus (Rat) protein is Stonin-2 (Ston2).